A 453-amino-acid polypeptide reads, in one-letter code: tRNA hydroxylation protein P (453 aa).

This sequence belongs to the peptidase U32 family.

Involved in prephenate-dependent formation of 5-hydroxyuridine (ho5U) modification at position 34 in tRNAs, the first step in 5-carboxymethoxyuridine (cmo5U) biosynthesis. Involved differently in ho5U formation in each tRNA; tRNA(Leu3) and tRNA(Pro3) are major targets of TrhP. This is tRNA hydroxylation protein P from Escherichia coli (strain K12).